Reading from the N-terminus, the 214-residue chain is 3-isopropylmalate dehydratase small subunit (214 aa).

This sequence belongs to the LeuD family. LeuD type 1 subfamily. In terms of assembly, heterodimer of LeuC and LeuD.

It catalyses the reaction (2R,3S)-3-isopropylmalate = (2S)-2-isopropylmalate. The protein operates within amino-acid biosynthesis; L-leucine biosynthesis; L-leucine from 3-methyl-2-oxobutanoate: step 2/4. Functionally, catalyzes the isomerization between 2-isopropylmalate and 3-isopropylmalate, via the formation of 2-isopropylmaleate. In Methylobacillus flagellatus (strain ATCC 51484 / DSM 6875 / VKM B-1610 / KT), this protein is 3-isopropylmalate dehydratase small subunit.